The chain runs to 289 residues: Right origin-binding protein (289 aa).

An HTH araC/xylS-type domain is found at Arg-8 to Ser-106. 2 DNA-binding regions (H-T-H motif) span residues Asp-25–Thr-46 and Ile-73–Phe-96.

Functionally, transcriptional regulator. Binds to the right arm of the replication origin oriC of the chromosome. Rob binding may influence the formation of the nucleoprotein structure, required for oriC function in the initiation of replication. The sequence is that of Right origin-binding protein (rob) from Escherichia coli O157:H7.